The sequence spans 609 residues: Zinc metalloproteinase-disintegrin-like VAP2B (609 aa).

The N-terminal stretch at 1–20 (MIQVLLVTICLAAFPYQGSS) is a signal peptide. The propeptide occupies 21 to 189 (IILESGNVND…KKASQLVVTA (169 aa)). E190 is subject to Pyrrolidone carboxylic acid (Glu). One can recognise a Peptidase M12B domain in the interval 198–393 (RFVELFLVVD…HNPECILNEP (196 aa)). Positions 201 and 285 each coordinate Ca(2+). Disulfide bonds link C308–C388, C348–C372, and C350–C355. H333 provides a ligand contact to Zn(2+). E334 is a catalytic residue. Zn(2+) is bound by residues H337 and H343. N371 carries N-linked (GlcNAc...) asparagine glycosylation. Residues C388, N391, V403, N406, L408, E410, E413, and D416 each contribute to the Ca(2+) site. The Disintegrin domain occupies 401–487 (PPVCGNELLE…ECPADVFHKN (87 aa)). 22 cysteine pairs are disulfide-bonded: C404-C423, C404-C433, C415-C428, C415-C433, C417-C423, C427-C450, C441-C447, C446-C472, C459-C479, C466-C491, C466-C498, C491-C503, C498-C503, C510-C525, C510-C560, C525-C571, C538-C548, C548-C555, C555-C597, C560-C571, C591-C602, and C597-C602. Residues 459–472 (CRASMSECDPAEHC) are inhibits platelet aggregation. Positions 465 to 467 (ECD) match the D/ECD-tripeptide motif. D467, P468, E470, D482, and V483 together coordinate Ca(2+).

It belongs to the venom metalloproteinase (M12B) family. P-III subfamily. P-IIIb sub-subfamily. As to quaternary structure, monomer or heterodimer; non-covalently linked. Interacts with fibrillar collagen. Requires Zn(2+) as cofactor. In terms of processing, the N-terminus is blocked. In terms of tissue distribution, expressed by the venom gland.

The protein localises to the secreted. Its function is as follows. Zinc metalloprotease that abolishes platelet aggregation induced by collagen, but has no effect on platelet aggregation induced by ADP or thromboxane analog. This inhibition may be due to its ability to bind collagen and block the binding site on collagen for platelets and/or to its ability to bind to the platelet alpha-2/beta-1 collagen receptor (ITGA2/ITGB1) to block its interaction with collagen and hence prevent platelet stimulation. In terms of biological role, abolishes platelet aggregation induced by collagen (IC(50)=66 nM) but not ADP-stimulated platelet aggregation. This inhibition may be due to its ability to bind collagen and block the binding site on collagen for platelets and/or to its ability to bind to the platelet alpha-2/beta-1 collagen receptor (ITGA2/ITGB1) to block its interaction with collagen and hence prevent platelet stimulation. This chain is Zinc metalloproteinase-disintegrin-like VAP2B, found in Crotalus atrox (Western diamondback rattlesnake).